A 727-amino-acid polypeptide reads, in one-letter code: Putative inactive disease susceptibility protein LOV1 (727 aa).

In terms of domain architecture, NB-ARC spans 44–336 (EQSVEALAGH…AAEGIITSSD (293 aa)). 5 LRR repeats span residues 459 to 484 (LPLLRVLDLSRVKFEGGKLPSSIGDL), 485 to 507 (IHLRFLSLHRAWISHLPSSLRNL), 509 to 530 (LLLYLNLGFNGMVHVPNVLKEM), 575 to 600 (MTKLRELSLFITDGSSDTLSSSLGQL), and 601 to 626 (RSLEVLHLYDRQEPRVAYHGGEIVLN).

This sequence belongs to the disease resistance NB-LRR family. RPP8/HRT subfamily.

This is Putative inactive disease susceptibility protein LOV1 (LOV1) from Arabidopsis thaliana (Mouse-ear cress).